The following is a 446-amino-acid chain: C4-dicarboxylate transport protein (446 aa).

The next 9 membrane-spanning stretches (helical) occupy residues 20-40 (HLYV…HFYP), 56-76 (LVKM…IAGM), 91-111 (IYFL…ANVV), 160-180 (GDIL…AGVG), 200-220 (LVHI…AFTI), 233-253 (FLIL…LGLV), 319-339 (IYMT…LSLG), 344-364 (LLLV…AGFI), and 367-387 (AATL…ILGI).

Belongs to the dicarboxylate/amino acid:cation symporter (DAACS) (TC 2.A.23) family.

It localises to the cell inner membrane. In terms of biological role, responsible for the transport of dicarboxylates such as succinate, fumarate, and malate from the periplasm across the membrane. This is C4-dicarboxylate transport protein from Azorhizobium caulinodans (strain ATCC 43989 / DSM 5975 / JCM 20966 / LMG 6465 / NBRC 14845 / NCIMB 13405 / ORS 571).